Here is a 168-residue protein sequence, read N- to C-terminus: Bcl2-associated agonist of cell death (168 aa).

Position 1 is an N-acetylmethionine (Met-1). The segment at 1–105 (MFQIPEFEPS…RSRSAPPNLW (105 aa)) is disordered. Ser-25 bears the Phosphoserine mark. Residues 49–60 (SHQQEQPTSSSH) are compositionally biased toward polar residues. Phosphoserine occurs at positions 75 and 91. Asymmetric dimethylarginine; by PRMT1 occurs at positions 94 and 96. The residue at position 97 (Ser-97) is a Phosphoserine. Ser-99 is modified (phosphoserine; by PKA, PKB, PAK1, RPS6KA1, RPS6KB1 and PKC/PRKCQ). Ser-99 carries the phosphoserine; by PKB/AKT1 modification. The BH3 motif lies at 110–124 (YGRELRRMSDEFVDS). Phosphoserine is present on residues Ser-118 and Ser-134. Residues 125-145 (FKKGLPRPKSAGTATQMRQSS) are disordered. Positions 136 to 145 (GTATQMRQSS) are enriched in polar residues. Arg-161 bears the Omega-N-methylarginine mark.

Belongs to the Bcl-2 family. Forms heterodimers with the anti-apoptotic proteins, Bcl-X(L), Bcl-2 and Bcl-W. Also binds protein S100A10. The Ser-75/Ser-99 phosphorylated form binds 14-3-3 proteins. Interacts with AKT1 and PIM3. Interacts (via BH3 domain) with NOL3 (via CARD domain); preventing the association of BAD with BCL2. Interacts with HIF3A (via C-terminus domain); the interaction reduces the binding between BAD and BAX. Interacts with GIMAP3/IAN4 and GIMAP5/IAN5. Post-translationally, phosphorylated on one or more of Ser-75, Ser-99, Ser-118 and Ser-134 in response to survival stimuli, which blocks its pro-apoptotic activity. Phosphorylation on Ser-99 or Ser-75 promotes heterodimerization with 14-3-3 proteins. This interaction then facilitates the phosphorylation at Ser-118, a site within the BH3 motif, leading to the release of Bcl-X(L) and the promotion of cell survival. Ser-99 is the major site of AKT/PKB phosphorylation, Ser-118 the major site of protein kinase A (CAPK) phosphorylation. Phosphorylation at Ser-99 by PKB/AKT1 is almost completely blocked by the apoptotic C-terminus cleavage product of PKN2 generated by caspases-3 activity during apoptosis. In terms of processing, methylation at Arg-94 and Arg-96 by PRMT1 inhibits Akt-mediated phosphorylation at Ser-99. As to expression, expressed in a wide variety of tissues.

Its subcellular location is the mitochondrion outer membrane. The protein resides in the cytoplasm. Promotes cell death. Successfully competes for the binding to Bcl-X(L), Bcl-2 and Bcl-W, thereby affecting the level of heterodimerization of these proteins with BAX. Can reverse the death repressor activity of Bcl-X(L), but not that of Bcl-2. Appears to act as a link between growth factor receptor signaling and the apoptotic pathways. The chain is Bcl2-associated agonist of cell death (BAD) from Homo sapiens (Human).